Reading from the N-terminus, the 443-residue chain is uncharacterized protein (443 aa).

The disordered stretch occupies residues 1–21 (MQSVTPPPTQQGKPDPTNSDM). A compositionally biased stretch (polar residues) spans 10-20 (QQGKPDPTNSD).

This is an uncharacterized protein from Caenorhabditis elegans.